Here is a 575-residue protein sequence, read N- to C-terminus: Proline--tRNA ligase, cytoplasmic (575 aa).

The protein belongs to the class-II aminoacyl-tRNA synthetase family.

The protein localises to the cytoplasm. The catalysed reaction is tRNA(Pro) + L-proline + ATP = L-prolyl-tRNA(Pro) + AMP + diphosphate. The protein is Proline--tRNA ligase, cytoplasmic (PRS) of Candida albicans (Yeast).